Here is a 433-residue protein sequence, read N- to C-terminus: Serine/threonine-protein kinase STK11 (433 aa).

Ser31 carries the post-translational modification Phosphoserine. Lys44 and Lys48 each carry N6-acetyllysine. The sufficient for interaction with SIRT1 stretch occupies residues Leu45–Asn90. The Protein kinase domain maps to Tyr49–Phe309. ATP contacts are provided by residues Leu55–Val63 and Lys78. 2 positions are modified to N6-acetyllysine: Lys96 and Lys97. Asp176 functions as the Proton acceptor in the catalytic mechanism. A Phosphothreonine; by autocatalysis modification is found at Thr189. N6-acetyllysine is present on residues Lys296 and Lys311. Residues Lys312–Arg331 are disordered. The span at Ala316–Pro326 shows a compositional bias: pro residues. Phosphoserine is present on Ser325. Thr336 carries the post-translational modification Phosphothreonine; by autocatalysis. Position 363 is a phosphothreonine; by ATM and autocatalysis (Thr363). Residues Ala397 to Gln433 are disordered. Residues Gln399 and Ser401 each carry the phosphoserine modification. Lys416 is subject to N6-acetyllysine. Cys418 carries S-palmitoyl cysteine lipidation. N6-acetyllysine is present on Lys423. A compositionally biased stretch (basic residues) spans Lys423–Gln433. At Ser428 the chain carries Phosphoserine; by autocatalysis, PKA, PKC/PRKCZ and RPS6KA1. Cys430 carries the post-translational modification Cysteine methyl ester. Cys430 carries S-farnesyl cysteine lipidation. Residue Lys431 is modified to N6-acetyllysine. The propeptide at Lys431–Gln433 is removed in mature form.

This sequence belongs to the protein kinase superfamily. CAMK Ser/Thr protein kinase family. LKB1 subfamily. In terms of assembly, catalytic component of a trimeric complex composed of STK11/LKB1, STRAD (STRADA or STRADB) and CAB39/MO25 (CAB39/MO25alpha or CAB39L/MO25beta): the complex tethers STK11/LKB1 in the cytoplasm and stimulates its catalytic activity. Found in a ternary complex composed of SMAD4, STK11/LKB1 and STK11IP. Interacts with p53/TP53, SMAD4, STK11IP and WDR6. Interacts with NR4A1. Interacts with NISCH; this interaction may increase STK11 activity. Interacts with PTEN; leading to PTEN phosphorylation. Interacts with SIRT1; the interaction deacetylates STK11. Interacts with CDKN1A. It depends on Mg(2+) as a cofactor. Mn(2+) is required as a cofactor. Phosphorylated by ATM at Thr-363 following ionizing radiation (IR). Phosphorylation at Ser-428 by RPS6KA1 and/or some PKA is required to inhibit cell growth. Phosphorylation at Ser-428 is also required during neuronal polarization to mediate phosphorylation of BRSK1 and BRSK2. Phosphorylation by PKC/PRKCZ at Ser-399 in isoform 2 promotes metformin (or peroxynitrite)-induced nuclear export of STK11 and activation of AMPK. UV radiation-induced phosphorylation at Thr-363 mediates CDKN1A degradation. In terms of processing, acetylated. Deacetylation at Lys-48 enhances cytoplasmic localization and kinase activity in vitro. Ubiquitously expressed. Strongest expression in testis and fetal liver.

The protein resides in the nucleus. It localises to the cytoplasm. Its subcellular location is the membrane. The protein localises to the mitochondrion. The catalysed reaction is L-seryl-[protein] + ATP = O-phospho-L-seryl-[protein] + ADP + H(+). It catalyses the reaction L-threonyl-[protein] + ATP = O-phospho-L-threonyl-[protein] + ADP + H(+). Its activity is regulated as follows. Activated by forming a complex with STRAD (STRADA or STRADB) and CAB39/MO25 (CAB39/MO25alpha or CAB39L/MO25beta): STRADA (or STRADB)-binding promotes a conformational change of STK11/LKB1 in an active conformation, which is stabilized by CAB39/MO25alpha (or CAB39L/MO25beta) interacting with the STK11/LKB1 activation loop. Sequestration in the nucleus by NR4A1 prevents it from phosphorylating and activating cytoplasmic AMPK. Functionally, tumor suppressor serine/threonine-protein kinase that controls the activity of AMP-activated protein kinase (AMPK) family members, thereby playing a role in various processes such as cell metabolism, cell polarity, apoptosis and DNA damage response. Acts by phosphorylating the T-loop of AMPK family proteins, thus promoting their activity: phosphorylates PRKAA1, PRKAA2, BRSK1, BRSK2, MARK1, MARK2, MARK3, MARK4, NUAK1, NUAK2, SIK1, SIK2, SIK3 and SNRK but not MELK. Also phosphorylates non-AMPK family proteins such as STRADA, PTEN and possibly p53/TP53. Acts as a key upstream regulator of AMPK by mediating phosphorylation and activation of AMPK catalytic subunits PRKAA1 and PRKAA2 and thereby regulates processes including: inhibition of signaling pathways that promote cell growth and proliferation when energy levels are low, glucose homeostasis in liver, activation of autophagy when cells undergo nutrient deprivation, and B-cell differentiation in the germinal center in response to DNA damage. Also acts as a regulator of cellular polarity by remodeling the actin cytoskeleton. Required for cortical neuron polarization by mediating phosphorylation and activation of BRSK1 and BRSK2, leading to axon initiation and specification. Involved in DNA damage response: interacts with p53/TP53 and recruited to the CDKN1A/WAF1 promoter to participate in transcription activation. Able to phosphorylate p53/TP53; the relevance of such result in vivo is however unclear and phosphorylation may be indirect and mediated by downstream STK11/LKB1 kinase NUAK1. Also acts as a mediator of p53/TP53-dependent apoptosis via interaction with p53/TP53: translocates to the mitochondrion during apoptosis and regulates p53/TP53-dependent apoptosis pathways. Regulates UV radiation-induced DNA damage response mediated by CDKN1A. In association with NUAK1, phosphorylates CDKN1A in response to UV radiation and contributes to its degradation which is necessary for optimal DNA repair. Its function is as follows. Has a role in spermiogenesis. This chain is Serine/threonine-protein kinase STK11, found in Homo sapiens (Human).